Reading from the N-terminus, the 886-residue chain is Alanine--tRNA ligase (886 aa).

Zn(2+) contacts are provided by H564, H568, C666, and H670.

Belongs to the class-II aminoacyl-tRNA synthetase family. Requires Zn(2+) as cofactor.

Its subcellular location is the cytoplasm. It catalyses the reaction tRNA(Ala) + L-alanine + ATP = L-alanyl-tRNA(Ala) + AMP + diphosphate. Its function is as follows. Catalyzes the attachment of alanine to tRNA(Ala) in a two-step reaction: alanine is first activated by ATP to form Ala-AMP and then transferred to the acceptor end of tRNA(Ala). Also edits incorrectly charged Ser-tRNA(Ala) and Gly-tRNA(Ala) via its editing domain. In Prochlorococcus marinus subsp. pastoris (strain CCMP1986 / NIES-2087 / MED4), this protein is Alanine--tRNA ligase.